The primary structure comprises 429 residues: Nicotinate phosphoribosyltransferase (429 aa).

Nicotinate contacts are provided by Y15, F177, and T229. H232 carries the phosphohistidine; by autocatalysis modification. R294 is a binding site for nicotinate. T355 lines the 5-phospho-alpha-D-ribose 1-diphosphate pocket.

The protein belongs to the NAPRTase family. Post-translationally, transiently phosphorylated on a His residue during the reaction cycle. Phosphorylation strongly increases the affinity for substrates and increases the rate of nicotinate D-ribonucleotide production. Dephosphorylation regenerates the low-affinity form of the enzyme, leading to product release.

The protein localises to the cytoplasm. The protein resides in the nucleus. It catalyses the reaction nicotinate + 5-phospho-alpha-D-ribose 1-diphosphate + ATP + H2O = nicotinate beta-D-ribonucleotide + ADP + phosphate + diphosphate. It functions in the pathway cofactor biosynthesis; NAD(+) biosynthesis; nicotinate D-ribonucleotide from nicotinate: step 1/1. Functionally, catalyzes the first step in the biosynthesis of NAD from nicotinic acid, the ATP-dependent synthesis of beta-nicotinate D-ribonucleotide from nicotinate and 5-phospho-D-ribose 1-phosphate. Essential for growth under anaerobic conditions. In Saccharomyces cerevisiae (strain ATCC 204508 / S288c) (Baker's yeast), this protein is Nicotinate phosphoribosyltransferase (NPT1).